The following is a 421-amino-acid chain: eIF5-mimic protein 1 (421 aa).

Positions 1–24 (MNTGKQQKPVLTGQRFKTRKRDEK) are disordered. One can recognise a W2 domain in the interval 250-417 (TQQTLGTRKE…QNAEEESESE (168 aa)).

It belongs to the BZW family.

Its subcellular location is the cytoplasm. Translation initiation regulator which may repress non-AUG initiated translation and repeat-associated non-AUG (RAN) initiated translation by acting as a competitive inhibitor of eukaryotic translation initiation factor 5 (EIF5) function. The sequence is that of eIF5-mimic protein 1 (bzw2) from Danio rerio (Zebrafish).